We begin with the raw amino-acid sequence, 127 residues long: EF-hand calcium-binding domain-containing protein 10 (127 aa).

The 36-residue stretch at 63 to 98 folds into the EF-hand domain; that stretch reads MDNSNIVAMFEMMDSSGRGTISFVQYKEALKTLGLC.

This Homo sapiens (Human) protein is EF-hand calcium-binding domain-containing protein 10 (EFCAB10).